The primary structure comprises 303 residues: Ribosomal protein L11 methyltransferase (303 aa).

S-adenosyl-L-methionine contacts are provided by T144, G165, D187, and N235.

Belongs to the methyltransferase superfamily. PrmA family.

It is found in the cytoplasm. The catalysed reaction is L-lysyl-[protein] + 3 S-adenosyl-L-methionine = N(6),N(6),N(6)-trimethyl-L-lysyl-[protein] + 3 S-adenosyl-L-homocysteine + 3 H(+). Functionally, methylates ribosomal protein L11. The chain is Ribosomal protein L11 methyltransferase from Prochlorococcus marinus (strain AS9601).